Here is a 176-residue protein sequence, read N- to C-terminus: ATP-dependent protease subunit HslV (176 aa).

Threonine 2 is a catalytic residue. Glycine 157, cysteine 160, and threonine 163 together coordinate Na(+).

The protein belongs to the peptidase T1B family. HslV subfamily. A double ring-shaped homohexamer of HslV is capped on each side by a ring-shaped HslU homohexamer. The assembly of the HslU/HslV complex is dependent on binding of ATP.

The protein resides in the cytoplasm. The catalysed reaction is ATP-dependent cleavage of peptide bonds with broad specificity.. Its activity is regulated as follows. Allosterically activated by HslU binding. Its function is as follows. Protease subunit of a proteasome-like degradation complex believed to be a general protein degrading machinery. The chain is ATP-dependent protease subunit HslV from Proteus mirabilis (strain HI4320).